Reading from the N-terminus, the 520-residue chain is Anthranilate synthase component 1 (520 aa).

Residues S40 and P291–M293 each bind L-tryptophan. Position 328–329 (G328–T329) interacts with chorismate. E361 contributes to the Mg(2+) binding site. Residues Y449, R469, G483–G485, and G485 each bind chorismate. E498 serves as a coordination point for Mg(2+).

This sequence belongs to the anthranilate synthase component I family. As to quaternary structure, heterotetramer consisting of two non-identical subunits: a beta subunit (TrpG) and a large lpha subunit (TrpE). Requires Mg(2+) as cofactor.

It carries out the reaction chorismate + L-glutamine = anthranilate + pyruvate + L-glutamate + H(+). It participates in amino-acid biosynthesis; L-tryptophan biosynthesis; L-tryptophan from chorismate: step 1/5. With respect to regulation, cooperatively feedback inhibited by tryptophan. Its function is as follows. Part of a heterotetrameric complex that catalyzes the two-step biosynthesis of anthranilate, an intermediate in the biosynthesis of L-tryptophan. In the first step, the glutamine-binding beta subunit (TrpG) of anthranilate synthase (AS) provides the glutamine amidotransferase activity which generates ammonia as a substrate that, along with chorismate, is used in the second step, catalyzed by the large alpha subunit of AS (TrpE) to produce anthranilate. In the absence of TrpG, TrpE can synthesize anthranilate directly from chorismate and high concentrations of ammonia. The sequence is that of Anthranilate synthase component 1 (trpE) from Escherichia coli (strain K12).